The following is a 269-amino-acid chain: Diaminopimelate epimerase (269 aa).

N15, Q49, and N66 together coordinate substrate. C75 serves as the catalytic Proton donor. Substrate is bound by residues 76–77 (GN), N155, N187, and 204–205 (ER). The Proton acceptor role is filled by C213. 214 to 215 (GS) lines the substrate pocket.

This sequence belongs to the diaminopimelate epimerase family. Homodimer.

It is found in the cytoplasm. The enzyme catalyses (2S,6S)-2,6-diaminopimelate = meso-2,6-diaminopimelate. It functions in the pathway amino-acid biosynthesis; L-lysine biosynthesis via DAP pathway; DL-2,6-diaminopimelate from LL-2,6-diaminopimelate: step 1/1. In terms of biological role, catalyzes the stereoinversion of LL-2,6-diaminopimelate (L,L-DAP) to meso-diaminopimelate (meso-DAP), a precursor of L-lysine and an essential component of the bacterial peptidoglycan. In Rickettsia canadensis (strain McKiel), this protein is Diaminopimelate epimerase.